A 779-amino-acid chain; its full sequence is Guanyl-specific ribonuclease pgl-1 (779 aa).

Residues 203–464 (KLLLEGVKEQ…KRIIDALEKS (262 aa)) are involved in dimerization. The active-site Proton acceptor is His453. Disordered stretches follow at residues 563–596 (HEPQTATLVPPSPNEESMAAESISTDGWDSPTKS), 611–661 (RDAL…GDAT), and 718–779 (GRGG…GGNF). A compositionally biased stretch (polar residues) spans 584 to 595 (SISTDGWDSPTK). Positions 612 to 626 (DALKPDSVNSHRSEE) are enriched in basic and acidic residues. An RNA-binding RGG-box region spans residues 699–772 (GGGGGSYGGR…GGDRGGRGGY (74 aa)).

As to quaternary structure, homodimer. Interacts with pgl-2 and pgl-3; this association is not required for P-granule localization of either pgl-2 or pgl-3. Interacts with ife-1. Interacts with prmt-1; the interaction is direct. Interacts with nmad-1. Interacts with P granule components meg-1, meg-3 and meg-4. Does not require metal ions for catalytic activity. is required as a cofactor.

The protein localises to the cytoplasmic granule. It catalyses the reaction [RNA] containing guanosine + H2O = an [RNA fragment]-3'-guanosine-3'-phosphate + a 5'-hydroxy-ribonucleotide-3'-[RNA fragment].. Guanyl-specific endoribonuclease which cleaves the phosphodiester bond in single-stranded RNA between the 3'-guanylic residue and the 5'-OH residue of adjacent nucleotide, resulting in the formation of a corresponding 2',3'-cyclic phosphate intermediate. Essential role in male and female postembryonic germline development; maternally provided protein maintains a population of proliferating germ cells and zygotic expression is required for correct oogenesis. Together with the P-granule component pgl-3, is involved in the formation of P-granules. Together with pgl-3, probably recruits other granule components such as pos-1, mex-3 and glh-1 to P-granules. In addition, may act redundantly with pgl-3 to protect germ cells from excessive germline apoptosis during normal oogenesis and development of the two gonadal arms. This may in part be through regulating the localization of sir-2.1 which is involved in germ cell apoptosis. May protect somatic cells from excessive apoptosis during normal development. This is Guanyl-specific ribonuclease pgl-1 from Caenorhabditis remanei (Caenorhabditis vulgaris).